A 429-amino-acid chain; its full sequence is Histidine--tRNA ligase (429 aa).

The protein belongs to the class-II aminoacyl-tRNA synthetase family. As to quaternary structure, homodimer.

It is found in the cytoplasm. The catalysed reaction is tRNA(His) + L-histidine + ATP = L-histidyl-tRNA(His) + AMP + diphosphate + H(+). The chain is Histidine--tRNA ligase from Prochlorococcus marinus subsp. pastoris (strain CCMP1986 / NIES-2087 / MED4).